A 320-amino-acid chain; its full sequence is ATP-dependent 6-phosphofructokinase (320 aa).

Residue Gly-12 coordinates ATP. Residue 22-26 participates in ADP binding; sequence RGVVR. Residues 73 to 74 and 103 to 106 each bind ATP; these read RF and GDGS. Asp-104 lines the Mg(2+) pocket. A substrate-binding site is contributed by 126–128; sequence TID. Asp-128 functions as the Proton acceptor in the catalytic mechanism. Arg-155 lines the ADP pocket. Substrate contacts are provided by residues Arg-163 and 170 to 172; that span reads MGR. ADP-binding positions include 186–188, Lys-212, and 214–216; these read GCE and KKH. Substrate is bound by residues Glu-223, Arg-244, and 250–253; that span reads HIQR.

The protein belongs to the phosphofructokinase type A (PFKA) family. ATP-dependent PFK group I subfamily. Prokaryotic clade 'B1' sub-subfamily. As to quaternary structure, homotetramer. Requires Mg(2+) as cofactor.

The protein resides in the cytoplasm. It carries out the reaction beta-D-fructose 6-phosphate + ATP = beta-D-fructose 1,6-bisphosphate + ADP + H(+). Its pathway is carbohydrate degradation; glycolysis; D-glyceraldehyde 3-phosphate and glycerone phosphate from D-glucose: step 3/4. With respect to regulation, allosterically activated by ADP and other diphosphonucleosides, and allosterically inhibited by phosphoenolpyruvate. Catalyzes the phosphorylation of D-fructose 6-phosphate to fructose 1,6-bisphosphate by ATP, the first committing step of glycolysis. The chain is ATP-dependent 6-phosphofructokinase from Vibrio cholerae serotype O1 (strain ATCC 39315 / El Tor Inaba N16961).